The sequence spans 713 residues: UvrABC system protein B (713 aa).

The Helicase ATP-binding domain maps to 35–421 (RRIRAGEKDV…GDGFVEQIIR (387 aa)). 48–55 (GATGTGKS) provides a ligand contact to ATP. A Beta-hairpin motif is present at residues 101–124 (YYDYYQPEAYVPQSDTYIEKDSSI). In terms of domain architecture, Helicase C-terminal spans 438 to 604 (QIDDLVHEIR…PLRKKINDIV (167 aa)). Positions 624-663 (QAKDGKGAKAPVPSLGGKAAAKGAKSAKGKAKETVPTDRP) are disordered. Positions 639-649 (GGKAAAKGAKS) are enriched in low complexity. The span at 653–663 (KAKETVPTDRP) shows a compositional bias: basic and acidic residues. The 36-residue stretch at 668–703 (AEEIEELTNRMRAAAADLQFEIAARLRDEVSEMKKE) folds into the UVR domain.

The protein belongs to the UvrB family. As to quaternary structure, forms a heterotetramer with UvrA during the search for lesions. Interacts with UvrC in an incision complex.

It is found in the cytoplasm. Functionally, the UvrABC repair system catalyzes the recognition and processing of DNA lesions. A damage recognition complex composed of 2 UvrA and 2 UvrB subunits scans DNA for abnormalities. Upon binding of the UvrA(2)B(2) complex to a putative damaged site, the DNA wraps around one UvrB monomer. DNA wrap is dependent on ATP binding by UvrB and probably causes local melting of the DNA helix, facilitating insertion of UvrB beta-hairpin between the DNA strands. Then UvrB probes one DNA strand for the presence of a lesion. If a lesion is found the UvrA subunits dissociate and the UvrB-DNA preincision complex is formed. This complex is subsequently bound by UvrC and the second UvrB is released. If no lesion is found, the DNA wraps around the other UvrB subunit that will check the other stand for damage. The polypeptide is UvrABC system protein B (Streptomyces avermitilis (strain ATCC 31267 / DSM 46492 / JCM 5070 / NBRC 14893 / NCIMB 12804 / NRRL 8165 / MA-4680)).